A 453-amino-acid polypeptide reads, in one-letter code: Probable glycine dehydrogenase (decarboxylating) subunit 1 (453 aa).

The protein belongs to the GcvP family. N-terminal subunit subfamily. The glycine cleavage system is composed of four proteins: P, T, L and H. In this organism, the P 'protein' is a heterodimer of two subunits.

The catalysed reaction is N(6)-[(R)-lipoyl]-L-lysyl-[glycine-cleavage complex H protein] + glycine + H(+) = N(6)-[(R)-S(8)-aminomethyldihydrolipoyl]-L-lysyl-[glycine-cleavage complex H protein] + CO2. Functionally, the glycine cleavage system catalyzes the degradation of glycine. The P protein binds the alpha-amino group of glycine through its pyridoxal phosphate cofactor; CO(2) is released and the remaining methylamine moiety is then transferred to the lipoamide cofactor of the H protein. The polypeptide is Probable glycine dehydrogenase (decarboxylating) subunit 1 (Methylococcus capsulatus (strain ATCC 33009 / NCIMB 11132 / Bath)).